Reading from the N-terminus, the 346-residue chain is Holliday junction branch migration complex subunit RuvB (346 aa).

Residues 1 to 182 (MTRVISGEPQ…FGIPIRLEFY (182 aa)) are large ATPase domain (RuvB-L). 9 residues coordinate ATP: Leu-21, Arg-22, Gly-63, Lys-66, Thr-67, Thr-68, Arg-172, Tyr-182, and Arg-219. Position 67 (Thr-67) interacts with Mg(2+). Positions 183 to 253 (TPAELRHVLQ…AAAMALARLE (71 aa)) are small ATPAse domain (RuvB-S). The interval 256 to 346 (ESGLDSLDRR…QAQGALFDEG (91 aa)) is head domain (RuvB-H). 3 residues coordinate DNA: Arg-292, Arg-311, and Arg-316.

Belongs to the RuvB family. Homohexamer. Forms an RuvA(8)-RuvB(12)-Holliday junction (HJ) complex. HJ DNA is sandwiched between 2 RuvA tetramers; dsDNA enters through RuvA and exits via RuvB. An RuvB hexamer assembles on each DNA strand where it exits the tetramer. Each RuvB hexamer is contacted by two RuvA subunits (via domain III) on 2 adjacent RuvB subunits; this complex drives branch migration. In the full resolvosome a probable DNA-RuvA(4)-RuvB(12)-RuvC(2) complex forms which resolves the HJ.

The protein resides in the cytoplasm. It catalyses the reaction ATP + H2O = ADP + phosphate + H(+). Functionally, the RuvA-RuvB-RuvC complex processes Holliday junction (HJ) DNA during genetic recombination and DNA repair, while the RuvA-RuvB complex plays an important role in the rescue of blocked DNA replication forks via replication fork reversal (RFR). RuvA specifically binds to HJ cruciform DNA, conferring on it an open structure. The RuvB hexamer acts as an ATP-dependent pump, pulling dsDNA into and through the RuvAB complex. RuvB forms 2 homohexamers on either side of HJ DNA bound by 1 or 2 RuvA tetramers; 4 subunits per hexamer contact DNA at a time. Coordinated motions by a converter formed by DNA-disengaged RuvB subunits stimulates ATP hydrolysis and nucleotide exchange. Immobilization of the converter enables RuvB to convert the ATP-contained energy into a lever motion, pulling 2 nucleotides of DNA out of the RuvA tetramer per ATP hydrolyzed, thus driving DNA branch migration. The RuvB motors rotate together with the DNA substrate, which together with the progressing nucleotide cycle form the mechanistic basis for DNA recombination by continuous HJ branch migration. Branch migration allows RuvC to scan DNA until it finds its consensus sequence, where it cleaves and resolves cruciform DNA. This Caulobacter vibrioides (strain ATCC 19089 / CIP 103742 / CB 15) (Caulobacter crescentus) protein is Holliday junction branch migration complex subunit RuvB.